We begin with the raw amino-acid sequence, 92 residues long: Small ribosomal subunit protein uS19 (92 aa).

It belongs to the universal ribosomal protein uS19 family.

In terms of biological role, protein S19 forms a complex with S13 that binds strongly to the 16S ribosomal RNA. This chain is Small ribosomal subunit protein uS19, found in Rhizobium johnstonii (strain DSM 114642 / LMG 32736 / 3841) (Rhizobium leguminosarum bv. viciae).